The following is a 227-amino-acid chain: Probable septum site-determining protein MinC (227 aa).

This sequence belongs to the MinC family. As to quaternary structure, interacts with MinD and FtsZ.

Functionally, cell division inhibitor that blocks the formation of polar Z ring septums. Rapidly oscillates between the poles of the cell to destabilize FtsZ filaments that have formed before they mature into polar Z rings. Prevents FtsZ polymerization. The sequence is that of Probable septum site-determining protein MinC from Geobacillus thermodenitrificans (strain NG80-2).